The primary structure comprises 235 residues: Elongation factor Tu, chloroplastic (235 aa).

Residues 1 to 125 (KNMITGAAQM…AVDEYIPTPV (125 aa)) enclose the tr-type G domain. GTP is bound at residue 47 to 50 (NKQD).

It belongs to the TRAFAC class translation factor GTPase superfamily. Classic translation factor GTPase family. EF-Tu/EF-1A subfamily.

It localises to the plastid. Its subcellular location is the chloroplast. It catalyses the reaction GTP + H2O = GDP + phosphate + H(+). In terms of biological role, GTP hydrolase that promotes the GTP-dependent binding of aminoacyl-tRNA to the A-site of ribosomes during protein biosynthesis. The protein is Elongation factor Tu, chloroplastic (tufA) of Gracilariopsis lemaneiformis (Red alga).